We begin with the raw amino-acid sequence, 345 residues long: Alpha-N-acetylneuraminide alpha-2,8-sialyltransferase (345 aa).

Residues 1 to 15 are Cytoplasmic-facing; that stretch reads MKLQGSRMWLCPRTR. Residues 16–36 form a helical; Signal-anchor for type II membrane protein membrane-spanning segment; it reads LPVGASALGFLILCWLYVFPG. Residues 37–345 lie on the Lumenal side of the membrane; it reads YRLPGHKEMV…KKDVSSQKPH (309 aa). Asn-59 and Asn-107 each carry an N-linked (GlcNAc...) asparagine glycan. Cystine bridges form between Cys-126-Cys-275 and Cys-140-Cys-335. 2 residues coordinate CMP-N-acetyl-beta-neuraminate: Asn-131 and Asn-154. Residues Asn-154 and 176-178 contribute to the substrate site; that span reads NPS. Residue Asn-233 is glycosylated (N-linked (GlcNAc...) asparagine). CMP-N-acetyl-beta-neuraminate contacts are provided by Ser-262, Thr-263, Gly-264, Trp-284, and His-298. 262–264 lines the substrate pocket; that stretch reads STG. The active-site Proton donor/acceptor is His-310.

Belongs to the glycosyltransferase 29 family.

The protein localises to the golgi apparatus membrane. The catalysed reaction is an N-acetyl-alpha-neuraminyl-(2-&gt;3)-beta-D-galactosyl derivative + CMP-N-acetyl-beta-neuraminate = an N-acetyl-alpha-neuraminyl-(2-&gt;8)-N-acetyl-alpha-neuraminyl-(2-&gt;3)-beta-D-galactosyl derivative + CMP + H(+). It catalyses the reaction a ganglioside GM3 (d18:1(4E)) + CMP-N-acetyl-beta-neuraminate = a ganglioside GD3 (d18:1(4E)) + CMP + H(+). The enzyme catalyses a ganglioside GD3 (d18:1(4E)) + CMP-N-acetyl-beta-neuraminate = a ganglioside GT3 (d18:1(4E)) + CMP + H(+). It carries out the reaction a ganglioside GD1a (d18:1(4E)) + CMP-N-acetyl-beta-neuraminate = a ganglioside GT1a (d18:1(4E)) + CMP + H(+). The catalysed reaction is a ganglioside GT1b (d18:1(4E)) + CMP-N-acetyl-beta-neuraminate = a ganglioside GQ1b (d18:1(4E)) + CMP + H(+). It catalyses the reaction a ganglioside GM1b (d18:1(4E)) + CMP-N-acetyl-beta-neuraminate = a ganglioside GD1c (d18:1(4E)) + CMP + H(+). The enzyme catalyses a ganglioside GD3 + CMP-N-acetyl-beta-neuraminate = a ganglioside GT3 + CMP + H(+). It carries out the reaction [alpha-N-acetylneuraminyl-(2-&gt;8)](n)-alpha-N-acetylneuraminyl-(2-&gt;8)-alpha-N-acetylneuraminyl-(2-&gt;3)-beta-D-galactosyl-(1-&gt;4)-beta-D-glucosyl-(1&lt;-&gt;1)-ceramide + CMP-N-acetyl-beta-neuraminate = [alpha-N-acetylneuraminyl-(2-&gt;8)](n+1)-alpha-N-acetylneuraminyl-(2-&gt;8)-alpha-N-acetylneuraminyl-(2-&gt;3)-beta-D-galactosyl-(1-&gt;4)-beta-D-glucosyl-(1&lt;-&gt;1)-ceramide + CMP + H(+). It participates in protein modification; protein glycosylation. It functions in the pathway lipid metabolism; sphingolipid metabolism. Its function is as follows. Catalyzes the addition of sialic acid in alpha 2,8-linkage to the sialic acid moiety of the ganglioside GM3 to form ganglioside GD3; gangliosides are a subfamily of complex glycosphingolipds that contain one or more residues of sialic acid. Glycosphingolipids are required for convergence extension movements during early development. Can catalyze the addition of a second alpha-2,8- sialic acid to GD3 to form GT3. Can use GM1b, GD1a and GT1b as acceptor substrates to synthesize GD1c, GT1a and GQ1b respectively. This chain is Alpha-N-acetylneuraminide alpha-2,8-sialyltransferase, found in Xenopus tropicalis (Western clawed frog).